Here is a 355-residue protein sequence, read N- to C-terminus: Protein RecA (355 aa).

Glycine 67 to threonine 74 lines the ATP pocket. A disordered region spans residues asparagine 336–phenylalanine 355. Residues aspartate 341 to phenylalanine 355 are compositionally biased toward acidic residues.

Belongs to the RecA family.

Its subcellular location is the cytoplasm. In terms of biological role, can catalyze the hydrolysis of ATP in the presence of single-stranded DNA, the ATP-dependent uptake of single-stranded DNA by duplex DNA, and the ATP-dependent hybridization of homologous single-stranded DNAs. It interacts with LexA causing its activation and leading to its autocatalytic cleavage. This chain is Protein RecA, found in Photorhabdus laumondii subsp. laumondii (strain DSM 15139 / CIP 105565 / TT01) (Photorhabdus luminescens subsp. laumondii).